The sequence spans 229 residues: Potassium/proton antiporter CemA (229 aa).

The next 3 membrane-spanning stretches (helical) occupy residues 6–26, 114–134, and 189–209; these read AFIPFLYLASIVFLPWWISLS, ILCFVILSGYSILGNEELLII, and IISGLVSTFPVILDTIFKYWI.

It belongs to the CemA family.

The protein localises to the plastid. Its subcellular location is the chloroplast inner membrane. The enzyme catalyses K(+)(in) + H(+)(out) = K(+)(out) + H(+)(in). Functionally, contributes to K(+)/H(+) antiport activity by supporting proton efflux to control proton extrusion and homeostasis in chloroplasts in a light-dependent manner to modulate photosynthesis. Prevents excessive induction of non-photochemical quenching (NPQ) under continuous-light conditions. Indirectly promotes efficient inorganic carbon uptake into chloroplasts. This chain is Potassium/proton antiporter CemA, found in Carica papaya (Papaya).